A 535-amino-acid chain; its full sequence is Glucan 1,6-alpha-glucosidase (535 aa).

The Nucleophile role is filled by aspartate 194. The active-site Proton donor is the glutamate 236.

Belongs to the glycosyl hydrolase 13 family.

It is found in the cytoplasm. The enzyme catalyses Hydrolysis of (1-&gt;6)-alpha-D-glucosidic linkages in (1-&gt;6)-alpha-D-glucans and derived oligosaccharides.. The physiological substrates may be short isomaltosaccharides. The polypeptide is Glucan 1,6-alpha-glucosidase (dexB) (Streptococcus pneumoniae serotype 4 (strain ATCC BAA-334 / TIGR4)).